A 51-amino-acid polypeptide reads, in one-letter code: YVSQRLCGSQLVDTLYSVCRHRGFYRPNDGIVDQCCTNICSRNQLMSYCND.

Intrachain disulfides connect Cys7/Cys36, Cys19/Cys49, and Cys35/Cys40.

Belongs to the insulin family. As to quaternary structure, heterodimer of a B chain and an A chain linked by two disulfide bonds.

Its subcellular location is the secreted. Insulin decreases blood glucose concentration. It increases cell permeability to monosaccharides, amino acids and fatty acids. It accelerates glycolysis, the pentose phosphate cycle, and glycogen synthesis in liver. The sequence is that of Insulin (INS) from Myocastor coypus (Coypu).